A 166-amino-acid chain; its full sequence is Interferon gamma (166 aa).

Residues 1–23 (MKYTSYFLALLLCVLLGFSGSYG) form the signal peptide. At Gln24 the chain carries Pyrrolidone carboxylic acid. Residues Asn39 and Asn106 are each glycosylated (N-linked (GlcNAc...) asparagine).

Belongs to the type II (or gamma) interferon family. As to quaternary structure, homodimer. Interacts with IFNGR1 (via extracellular domain); this interaction promotes IFNGR1 dimerization. As to expression, released primarily from activated T lymphocytes.

The protein localises to the secreted. Functionally, type II interferon produced by immune cells such as T-cells and NK cells that plays crucial roles in antimicrobial, antiviral, and antitumor responses by activating effector immune cells and enhancing antigen presentation. Primarily signals through the JAK-STAT pathway after interaction with its receptor IFNGR1 to affect gene regulation. Upon IFNG binding, IFNGR1 intracellular domain opens out to allow association of downstream signaling components JAK2, JAK1 and STAT1, leading to STAT1 activation, nuclear translocation and transcription of IFNG-regulated genes. Many of the induced genes are transcription factors such as IRF1 that are able to further drive regulation of a next wave of transcription. Plays a role in class I antigen presentation pathway by inducing a replacement of catalytic proteasome subunits with immunoproteasome subunits. In turn, increases the quantity, quality, and repertoire of peptides for class I MHC loading. Increases the efficiency of peptide generation also by inducing the expression of activator PA28 that associates with the proteasome and alters its proteolytic cleavage preference. Up-regulates as well MHC II complexes on the cell surface by promoting expression of several key molecules such as cathepsins B/CTSB, H/CTSH, and L/CTSL. Participates in the regulation of hematopoietic stem cells during development and under homeostatic conditions by affecting their development, quiescence, and differentiation. This chain is Interferon gamma (IFNG), found in Bos indicus (Zebu).